Here is a 286-residue protein sequence, read N- to C-terminus: uncharacterized protein (286 aa).

Residues 2–221 form the Radical SAM core domain; that stretch reads VDGMKHLILK…PIYIKNLQKR (220 aa). [4Fe-4S] cluster contacts are provided by C16, C20, and C23.

It belongs to the radical SAM superfamily. Anaerobic sulfatase-maturating enzyme family. [4Fe-4S] cluster serves as cofactor.

This is an uncharacterized protein from Methanocaldococcus jannaschii (strain ATCC 43067 / DSM 2661 / JAL-1 / JCM 10045 / NBRC 100440) (Methanococcus jannaschii).